A 142-amino-acid chain; its full sequence is FAD synthase (142 aa).

Residues 9–10 (TF), 14–17 (HPGH), aspartate 92, and tyrosine 119 each bind ATP.

It belongs to the archaeal FAD synthase family. Homodimer. The cofactor is a divalent metal cation.

It catalyses the reaction FMN + ATP + H(+) = FAD + diphosphate. It functions in the pathway cofactor biosynthesis; FAD biosynthesis; FAD from FMN: step 1/1. Functionally, catalyzes the transfer of the AMP portion of ATP to flavin mononucleotide (FMN) to produce flavin adenine dinucleotide (FAD) coenzyme. This Halorhabdus utahensis (strain DSM 12940 / JCM 11049 / AX-2) protein is FAD synthase.